Here is a 238-residue protein sequence, read N- to C-terminus: ATP synthase subunit a (238 aa).

The next 5 membrane-spanning stretches (helical) occupy residues 18 to 38 (GTTM…TVIG), 76 to 96 (FIVL…MGIP), 117 to 137 (VLTL…GIMV), 173 to 193 (LFGN…LGTT), and 208 to 230 (WQAF…AMVY).

It belongs to the ATPase A chain family. As to quaternary structure, F-type ATPases have 2 components, CF(1) - the catalytic core - and CF(0) - the membrane proton channel. CF(1) has five subunits: alpha(3), beta(3), gamma(1), delta(1), epsilon(1). CF(0) has three main subunits: a(1), b(2) and c(9-12). The alpha and beta chains form an alternating ring which encloses part of the gamma chain. CF(1) is attached to CF(0) by a central stalk formed by the gamma and epsilon chains, while a peripheral stalk is formed by the delta and b chains.

Its subcellular location is the cell membrane. Its function is as follows. Key component of the proton channel; it plays a direct role in the translocation of protons across the membrane. This chain is ATP synthase subunit a, found in Shouchella clausii (strain KSM-K16) (Alkalihalobacillus clausii).